Reading from the N-terminus, the 513-residue chain is Xyloglucan 6-xylosyltransferase 4 (513 aa).

Residues 1–39 lie on the Cytoplasmic side of the membrane; that stretch reads MFQDGSRSSGSGRGLSTTAVSNGGWRTRGFLRGWQIQNT. The chain crosses the membrane as a helical; Signal-anchor for type II membrane protein span at residues 40–60; sequence LFNNIKFMILCCFVTILILLG. Residues 61–513 are Lumenal-facing; the sequence is TIRVGNLGSS…IRRMHMETKP (453 aa). Residues N76, N110, N142, N174, and N490 are each glycosylated (N-linked (GlcNAc...) asparagine).

Belongs to the glycosyltransferase 34 family.

It is found in the golgi apparatus membrane. The catalysed reaction is Transfers an alpha-D-xylosyl residue from UDP-D-xylose to a glucose residue in xyloglucan, forming an alpha-(1-&gt;6)-D-xylosyl-D-glucose linkage.. Functionally, xylosyltransferase specific to UDP-D-xylose that accepts cellohexaose as substrate to produce xyloglucan. In Arabidopsis thaliana (Mouse-ear cress), this protein is Xyloglucan 6-xylosyltransferase 4.